Reading from the N-terminus, the 100-residue chain is MHLSPQEKDKLLIVTAALLAERRLNRGLKLNHPEAVAWLGFLVLEGARDGKSVAELMQEGTTWLRQDQVMEGVPELVHEVQIEAVFPDGTKLVTLHDPIR.

The protein belongs to the urease gamma subunit family. Heterotrimer of UreA (gamma), UreB (beta) and UreC (alpha) subunits. Three heterotrimers associate to form the active enzyme.

The protein resides in the cytoplasm. The catalysed reaction is urea + 2 H2O + H(+) = hydrogencarbonate + 2 NH4(+). It functions in the pathway nitrogen metabolism; urea degradation; CO(2) and NH(3) from urea (urease route): step 1/1. The chain is Urease subunit gamma from Parasynechococcus marenigrum (strain WH8102).